Consider the following 179-residue polypeptide: Putative 5'(3')-deoxyribonucleotidase (179 aa).

Asp-9 serves as the catalytic Nucleophile. 3 residues coordinate Mg(2+): Asp-9, Asp-11, and Asp-135. Asp-11 functions as the Proton donor in the catalytic mechanism.

It belongs to the 5'(3')-deoxyribonucleotidase family. Mg(2+) serves as cofactor.

Dephosphorylates the 5' and 2'(3')-phosphates of deoxyribonucleotides. The polypeptide is Putative 5'(3')-deoxyribonucleotidase (Staphylococcus epidermidis (strain ATCC 35984 / DSM 28319 / BCRC 17069 / CCUG 31568 / BM 3577 / RP62A)).